A 168-amino-acid chain; its full sequence is Photosystem I assembly protein Ycf3 (168 aa).

3 TPR repeats span residues 35–68 (AFTY…EIDP), 72–105 (SYIL…NPFL), and 120–153 (GEQA…TPGN).

The protein belongs to the Ycf3 family.

Its subcellular location is the plastid. It localises to the chloroplast thylakoid membrane. Essential for the assembly of the photosystem I (PSI) complex. May act as a chaperone-like factor to guide the assembly of the PSI subunits. This Coffea arabica (Arabian coffee) protein is Photosystem I assembly protein Ycf3.